Reading from the N-terminus, the 794-residue chain is Ent-copalyl diphosphate synthase 2 (794 aa).

The transit peptide at 1 to 35 directs the protein to the chloroplast; it reads MSSSSNVTSLPRLTTAGGVFPREMVRVHSSCNILR. Lys238 is a binding site for substrate. Asp369 and Asp371 together coordinate Mg(2+). Positions 369–372 match the DXDD motif motif; sequence DVDD. Lys455 contributes to the substrate binding site.

This sequence belongs to the terpene synthase family. Tpsc subfamily. The cofactor is Mg(2+). Expressed in leaves.

The protein localises to the plastid. Its subcellular location is the chloroplast. The catalysed reaction is (2E,6E,10E)-geranylgeranyl diphosphate = ent-copalyl diphosphate. Its pathway is secondary metabolite biosynthesis; terpenoid biosynthesis. In terms of biological role, involved in the biosynthesis of ent-kaurene diterpenoids natural products such as oridonin, miltiradiene, eriocalyxin B and nezukol, known to exhibit antitumor, anti-inflammatory and antibacterial activities. Catalyzes the conversion of (2E,6E,10E)-geranylgeranyl diphosphate (GGPP) to ent-copalyl diphosphate (ent-CPP). This is Ent-copalyl diphosphate synthase 2 from Isodon eriocalyx (Plectranthus eriocalyx).